Reading from the N-terminus, the 72-residue chain is UPF0270 protein KPK_0377 (72 aa).

This sequence belongs to the UPF0270 family.

This Klebsiella pneumoniae (strain 342) protein is UPF0270 protein KPK_0377.